Consider the following 248-residue polypeptide: Adenosylcobinamide-GDP ribazoletransferase (248 aa).

The next 6 membrane-spanning stretches (helical) occupy residues 34–54 (LVFA…LFYI), 58–78 (FFPP…LTGG), 113–133 (AVLA…SIPL), 139–159 (ALLL…GSTV), 185–205 (IIYF…LAAA), and 227–247 (DILG…FYLF).

The protein belongs to the CobS family. Mg(2+) is required as a cofactor.

It is found in the cell membrane. It catalyses the reaction alpha-ribazole + adenosylcob(III)inamide-GDP = adenosylcob(III)alamin + GMP + H(+). It carries out the reaction alpha-ribazole 5'-phosphate + adenosylcob(III)inamide-GDP = adenosylcob(III)alamin 5'-phosphate + GMP + H(+). It participates in cofactor biosynthesis; adenosylcobalamin biosynthesis; adenosylcobalamin from cob(II)yrinate a,c-diamide: step 7/7. Its function is as follows. Joins adenosylcobinamide-GDP and alpha-ribazole to generate adenosylcobalamin (Ado-cobalamin). Also synthesizes adenosylcobalamin 5'-phosphate from adenosylcobinamide-GDP and alpha-ribazole 5'-phosphate. This is Adenosylcobinamide-GDP ribazoletransferase from Acetivibrio thermocellus (strain ATCC 27405 / DSM 1237 / JCM 9322 / NBRC 103400 / NCIMB 10682 / NRRL B-4536 / VPI 7372) (Clostridium thermocellum).